Consider the following 349-residue polypeptide: MSTIITIPRSVSWKGDAIAVLNQTKLPHVTEYKTLTNIEDVWKSIIMLEVRGAPAIGIVAAFGLALAAKKYDAINIYEFQKKFNRDCNYLGTSRPTAVNLFWAIDRMRESIREITTIKEAQKILEEEALHIQQEDEMVCRSIGEHALTCFKDGDKILTICNAGSIATARYGTALAPFYIGKEKGVRLHAYACETRPVLQGGRLTTWELKQADIDVTLITDNTAAHAIRTKEINAIIVGADRIVENGDTANKIGTLNLAILAKYFGIPFYVAAPLSTFDTTKQTGAEIVIEERDETEVTKIFGKQVAPLGTPVFNPAFDVTPHELITGIITEKGILRGDYKQEITSLFEK.

Substrate is bound by residues 51–53, Arg94, and Gln199; that span reads RGA. Asp240 serves as the catalytic Proton donor. Residue 250–251 coordinates substrate; sequence NK.

This sequence belongs to the EIF-2B alpha/beta/delta subunits family. MtnA subfamily. In terms of assembly, homodimer.

It carries out the reaction 5-(methylsulfanyl)-alpha-D-ribose 1-phosphate = 5-(methylsulfanyl)-D-ribulose 1-phosphate. It participates in amino-acid biosynthesis; L-methionine biosynthesis via salvage pathway; L-methionine from S-methyl-5-thio-alpha-D-ribose 1-phosphate: step 1/6. Functionally, catalyzes the interconversion of methylthioribose-1-phosphate (MTR-1-P) into methylthioribulose-1-phosphate (MTRu-1-P). In Bacillus mycoides (strain KBAB4) (Bacillus weihenstephanensis), this protein is Methylthioribose-1-phosphate isomerase.